A 521-amino-acid chain; its full sequence is Bifunctional purine biosynthesis protein PurH (521 aa).

Residues 1–149 enclose the MGS-like domain; it reads MSDPVIKRAL…KNNESVTVVT (149 aa).

This sequence belongs to the PurH family.

The catalysed reaction is (6R)-10-formyltetrahydrofolate + 5-amino-1-(5-phospho-beta-D-ribosyl)imidazole-4-carboxamide = 5-formamido-1-(5-phospho-D-ribosyl)imidazole-4-carboxamide + (6S)-5,6,7,8-tetrahydrofolate. The enzyme catalyses IMP + H2O = 5-formamido-1-(5-phospho-D-ribosyl)imidazole-4-carboxamide. It participates in purine metabolism; IMP biosynthesis via de novo pathway; 5-formamido-1-(5-phospho-D-ribosyl)imidazole-4-carboxamide from 5-amino-1-(5-phospho-D-ribosyl)imidazole-4-carboxamide (10-formyl THF route): step 1/1. It functions in the pathway purine metabolism; IMP biosynthesis via de novo pathway; IMP from 5-formamido-1-(5-phospho-D-ribosyl)imidazole-4-carboxamide: step 1/1. The sequence is that of Bifunctional purine biosynthesis protein PurH from Chlorobium phaeobacteroides (strain DSM 266 / SMG 266 / 2430).